The chain runs to 444 residues: Trigger factor (444 aa).

One can recognise a PPIase FKBP-type domain in the interval aspartate 160–proline 245.

This sequence belongs to the FKBP-type PPIase family. Tig subfamily.

It is found in the cytoplasm. The enzyme catalyses [protein]-peptidylproline (omega=180) = [protein]-peptidylproline (omega=0). Its function is as follows. Involved in protein export. Acts as a chaperone by maintaining the newly synthesized protein in an open conformation. Functions as a peptidyl-prolyl cis-trans isomerase. This Acinetobacter baumannii (strain SDF) protein is Trigger factor.